The chain runs to 201 residues: Small ribosomal subunit protein uS4c (201 aa).

The segment at 15-43 (LGALPGLTSKRPTPGSDLRNQSRSGKRSQ) is disordered. Residues 89 to 149 (MRLDNILFRL…DEQKSRALIQ (61 aa)) enclose the S4 RNA-binding domain.

Belongs to the universal ribosomal protein uS4 family. As to quaternary structure, part of the 30S ribosomal subunit. Contacts protein S5. The interaction surface between S4 and S5 is involved in control of translational fidelity.

The protein localises to the plastid. Its subcellular location is the chloroplast. One of the primary rRNA binding proteins, it binds directly to 16S rRNA where it nucleates assembly of the body of the 30S subunit. Its function is as follows. With S5 and S12 plays an important role in translational accuracy. The sequence is that of Small ribosomal subunit protein uS4c (rps4) from Nandina domestica (Heavenly bamboo).